Consider the following 131-residue polypeptide: Interleukin-13 (131 aa).

The N-terminal stretch at 1–18 (MALWLTLVIALTCFGGLA) is a signal peptide. N-linked (GlcNAc...) asparagine glycans are attached at residues Asn-39, Asn-50, Asn-58, and Asn-74. Intrachain disulfides connect Cys-49–Cys-78 and Cys-66–Cys-92.

Belongs to the IL-4/IL-13 family. In terms of assembly, interacts with IL13RA2.

Its subcellular location is the secreted. Cytokine that plays important roles in allergic inflammation and immune response to parasite infection. Synergizes with IL2 in regulating interferon-gamma synthesis. Stimulates B-cell proliferation, and activation of eosinophils, basophils, and mast cells. Plays an important role in controlling IL33 activity by modulating the production of transmembrane and soluble forms of interleukin-1 receptor-like 1/IL1RL1. Displays the capacity to antagonize Th1-driven proinflammatory immune response and downregulates synthesis of many proinflammatory cytokines including IL1, IL6, IL10, IL12 and TNF-alpha through a mechanism that partially involves suppression of NF-kappa-B. Also functions on nonhematopoietic cells, including endothelial cells where it induces vascular cell adhesion protein 1/VCAM1, which is important in the recruitment of eosinophils. Exerts its biological effects through its receptors which comprises the IL4R chain and the IL13RA1 chain, to activate JAK1 and TYK2, leading to the activation of STAT6. Aside from IL13RA1, another receptor IL13RA2 acts as a high affinity decoy for IL13 and mediates internalization and depletion of extracellular IL13. In Sus scrofa (Pig), this protein is Interleukin-13 (IL13).